A 107-amino-acid chain; its full sequence is Nucleoid-associated protein MCA1327 (107 aa).

It belongs to the YbaB/EbfC family. In terms of assembly, homodimer.

It localises to the cytoplasm. The protein resides in the nucleoid. Its function is as follows. Binds to DNA and alters its conformation. May be involved in regulation of gene expression, nucleoid organization and DNA protection. The polypeptide is Nucleoid-associated protein MCA1327 (Methylococcus capsulatus (strain ATCC 33009 / NCIMB 11132 / Bath)).